Reading from the N-terminus, the 485-residue chain is UDP-N-acetylmuramate--L-alanine ligase (485 aa).

120–126 (GSHGKTT) contacts ATP.

This sequence belongs to the MurCDEF family.

It localises to the cytoplasm. The enzyme catalyses UDP-N-acetyl-alpha-D-muramate + L-alanine + ATP = UDP-N-acetyl-alpha-D-muramoyl-L-alanine + ADP + phosphate + H(+). The protein operates within cell wall biogenesis; peptidoglycan biosynthesis. Its function is as follows. Cell wall formation. The protein is UDP-N-acetylmuramate--L-alanine ligase of Rickettsia conorii (strain ATCC VR-613 / Malish 7).